Consider the following 81-residue polypeptide: uncharacterized protein (81 aa).

The tract at residues 11-34 (GSVSSSNKVSVANGSSSSSFGSNG) is disordered.

This is an uncharacterized protein from Dictyostelium discoideum (Social amoeba).